The sequence spans 196 residues: HTH-type transcriptional regulator EcpR (196 aa).

In terms of domain architecture, HTH luxR-type spans 138–196 (KDIKKDKITDREMEIIRMTAQGMLPKSIARIENCSVKTVYTHRRNAEAKLYSKLYKLVQ). Positions 162 to 181 (PKSIARIENCSVKTVYTHRR) form a DNA-binding region, H-T-H motif.

Belongs to the EcpR/MatA family.

Its subcellular location is the cytoplasm. Its function is as follows. Part of the ecpRABCDE operon, which encodes the E.coli common pilus (ECP). ECP is found in both commensal and pathogenic strains and plays a dual role in early-stage biofilm development and host cell recognition. Positively regulates the expression of the ecp operon by binding to two TTCCT boxes. The chain is HTH-type transcriptional regulator EcpR (ecpR) from Escherichia coli O157:H7.